Here is a 152-residue protein sequence, read N- to C-terminus: Large ribosomal subunit protein bL9 (152 aa).

This sequence belongs to the bacterial ribosomal protein bL9 family.

Binds to the 23S rRNA. In Mycoplasmopsis synoviae (strain 53) (Mycoplasma synoviae), this protein is Large ribosomal subunit protein bL9.